The following is a 133-amino-acid chain: Small ribosomal subunit protein uS8 (133 aa).

Belongs to the universal ribosomal protein uS8 family. As to quaternary structure, part of the 30S ribosomal subunit. Contacts proteins S5 and S12.

One of the primary rRNA binding proteins, it binds directly to 16S rRNA central domain where it helps coordinate assembly of the platform of the 30S subunit. The chain is Small ribosomal subunit protein uS8 from Nostoc punctiforme (strain ATCC 29133 / PCC 73102).